The following is a 71-amino-acid chain: uncharacterized protein (71 aa).

This is an uncharacterized protein from Escherichia coli (strain K12).